A 304-amino-acid polypeptide reads, in one-letter code: Neurexophilin-4 (304 aa).

Positions 1–23 (MRLLPEWLLLLFGPWLLRKVISG) are cleaved as a signal peptide. The tract at residues 24 to 84 (QIVESGRPQY…GALARPGAAG (61 aa)) is II. Residues Asn72, Asn133, Asn143, and Asn149 are each glycosylated (N-linked (GlcNAc...) asparagine). Residues 85–163 (GPPVPRTKRK…IVPPSKRVEF (79 aa)) are III. Residues 164–220 (GGVWLPGPAPHPLQSTLALEGVLPGLGPPLGMAGQGLGGNLGGALAGPLGGALGVPG) form an IV (linker domain) region. Residues 221-304 (AKESRAFNCH…NFQSEHPYFG (84 aa)) form a v (Cys-rich) region.

The protein belongs to the neurexophilin family. May be proteolytically processed in neuron-like cells. In terms of tissue distribution, brain and kidney.

The protein localises to the secreted. May be signaling molecules that resemble neuropeptides and that act by binding to alpha-neurexins and possibly other receptors. The protein is Neurexophilin-4 (Nxph4) of Rattus norvegicus (Rat).